The sequence spans 111 residues: Cytochrome b-c1 complex subunit 7 (111 aa).

The residue at position 2 (Ala2) is an N-acetylalanine. Lys12 is subject to N6-acetyllysine; alternate. Residue Lys12 is modified to N6-succinyllysine; alternate. An N6-acetyllysine modification is found at Lys19. The residue at position 78 (Lys78) is an N6-acetyllysine; alternate. An N6-succinyllysine; alternate modification is found at Lys78. At Lys83 the chain carries N6-acetyllysine. N6-acetyllysine; alternate is present on Lys88. Lys88 is modified (N6-succinyllysine; alternate). Position 96 is an N6-acetyllysine (Lys96).

It belongs to the UQCRB/QCR7 family. Component of the ubiquinol-cytochrome c oxidoreductase (cytochrome b-c1 complex, complex III, CIII), a multisubunit enzyme composed of 11 subunits. The complex is composed of 3 respiratory subunits cytochrome b, cytochrome c1 and Rieske protein UQCRFS1, 2 core protein subunits UQCRC1/QCR1 and UQCRC2/QCR2, and 6 low-molecular weight protein subunits UQCRH/QCR6, UQCRB/QCR7, UQCRQ/QCR8, UQCR10/QCR9, UQCR11/QCR10 and subunit 9, the cleavage product of Rieske protein UQCRFS1. The complex exists as an obligatory dimer and forms supercomplexes (SCs) in the inner mitochondrial membrane with NADH-ubiquinone oxidoreductase (complex I, CI) and cytochrome c oxidase (complex IV, CIV), resulting in different assemblies (supercomplex SCI(1)III(2)IV(1) and megacomplex MCI(2)III(2)IV(2)).

The protein localises to the mitochondrion inner membrane. In terms of biological role, component of the ubiquinol-cytochrome c oxidoreductase, a multisubunit transmembrane complex that is part of the mitochondrial electron transport chain which drives oxidative phosphorylation. The respiratory chain contains 3 multisubunit complexes succinate dehydrogenase (complex II, CII), ubiquinol-cytochrome c oxidoreductase (cytochrome b-c1 complex, complex III, CIII) and cytochrome c oxidase (complex IV, CIV), that cooperate to transfer electrons derived from NADH and succinate to molecular oxygen, creating an electrochemical gradient over the inner membrane that drives transmembrane transport and the ATP synthase. The cytochrome b-c1 complex catalyzes electron transfer from ubiquinol to cytochrome c, linking this redox reaction to translocation of protons across the mitochondrial inner membrane, with protons being carried across the membrane as hydrogens on the quinol. In the process called Q cycle, 2 protons are consumed from the matrix, 4 protons are released into the intermembrane space and 2 electrons are passed to cytochrome c. The chain is Cytochrome b-c1 complex subunit 7 (Uqcrb) from Mus musculus (Mouse).